A 231-amino-acid polypeptide reads, in one-letter code: ATP phosphoribosyltransferase (231 aa).

This sequence belongs to the ATP phosphoribosyltransferase family. Short subfamily. As to quaternary structure, heteromultimer composed of HisG and HisZ subunits.

The protein localises to the cytoplasm. It catalyses the reaction 1-(5-phospho-beta-D-ribosyl)-ATP + diphosphate = 5-phospho-alpha-D-ribose 1-diphosphate + ATP. The protein operates within amino-acid biosynthesis; L-histidine biosynthesis; L-histidine from 5-phospho-alpha-D-ribose 1-diphosphate: step 1/9. Functionally, catalyzes the condensation of ATP and 5-phosphoribose 1-diphosphate to form N'-(5'-phosphoribosyl)-ATP (PR-ATP). Has a crucial role in the pathway because the rate of histidine biosynthesis seems to be controlled primarily by regulation of HisG enzymatic activity. The polypeptide is ATP phosphoribosyltransferase (hisG) (Rhizobium meliloti (strain 1021) (Ensifer meliloti)).